Here is a 733-residue protein sequence, read N- to C-terminus: Polyribonucleotide nucleotidyltransferase (733 aa).

The Mg(2+) site is built by Asp488 and Asp494. Positions 555–614 (PRIEMMTIPVEKIREVIGSGGKVIREIVEQTGAKINIEDDGTIKIASPDTKSIETAKSWI) constitute a KH domain. Residues 624–692 (GTIYQGTVVK…ERGKIRLSMK (69 aa)) form the S1 motif domain. The disordered stretch occupies residues 698-733 (TGKEIPQDDLIKTEKEQNPDEKNKSEKKRHNRKKED). Residues 702–721 (IPQDDLIKTEKEQNPDEKNK) show a composition bias toward basic and acidic residues. Positions 722 to 733 (SEKKRHNRKKED) are enriched in basic residues.

It belongs to the polyribonucleotide nucleotidyltransferase family. The cofactor is Mg(2+).

The protein resides in the cytoplasm. It carries out the reaction RNA(n+1) + phosphate = RNA(n) + a ribonucleoside 5'-diphosphate. Its function is as follows. Involved in mRNA degradation. Catalyzes the phosphorolysis of single-stranded polyribonucleotides processively in the 3'- to 5'-direction. In Bartonella bacilliformis (strain ATCC 35685 / KC583 / Herrer 020/F12,63), this protein is Polyribonucleotide nucleotidyltransferase.